We begin with the raw amino-acid sequence, 159 residues long: uncharacterized protein (159 aa).

Residues Ile4 to Cys153 form the N-acetyltransferase domain.

This sequence belongs to the acetyltransferase family.

This is an uncharacterized protein from Escherichia coli (strain K12).